Here is a 332-residue protein sequence, read N- to C-terminus: MEAEEGHQRDRLCDYCDSSVALVYCKADSAKLCLACDKQVHVANQLFAKHFRSLLCDSCNESPSSLFCETERSVLCQNCDWQHHTASSSLHSRRPFEGFTGCPSVPELLAIVGLDDLTLDSGLLWESPEIVSLNDLIVSGGSGTHNFRATDVPPLPKNRHATCGKYKDEMIRQLRGLSRSEPGCLKFETPDAEIDAGFQFLAPDLFSTCELESGLKWFDQQDHEDFPYCSLLKNLSESDEKPENVDRESSVMVPVSGCLNRCEEETVMVPVITSTRSMTHEINSLERNSALSRYKEKKKSRRYEKHIRYESRKVRAESRTRIRGRFAKAADP.

The Zn(2+) site is built by Cys13, Cys16, Cys36, His41, Cys56, Cys59, Cys79, and His84. A B box-type 1; atypical zinc finger spans residues 13-55; the sequence is CDYCDSSVALVYCKADSAKLCLACDKQVHVANQLFAKHFRSLL. The B box-type 2; atypical zinc-finger motif lies at 56–96; that stretch reads CDSCNESPSSLFCETERSVLCQNCDWQHHTASSSLHSRRPF. The 43-residue stretch at 287–329 folds into the CCT domain; it reads RNSALSRYKEKKKSRRYEKHIRYESRKVRAESRTRIRGRFAKA.

This sequence belongs to the CONSTANS family.

The protein localises to the nucleus. The protein is Zinc finger protein CONSTANS-LIKE 13 (COL13) of Arabidopsis thaliana (Mouse-ear cress).